The sequence spans 1487 residues: Probable serine/threonine-protein kinase roco11 (1487 aa).

The disordered stretch occupies residues 108-134 (TQPSSSHNHSNHHHHHHQQQLQQQQQQ). Residues 116–125 (HSNHHHHHHQ) show a composition bias toward basic residues. LRR repeat units follow at residues 295–316 (NLAE…ICQL), 318–340 (HLKI…ANLT), and 341–362 (NLKY…IIEQ). A Roc domain is found at 379-564 (KSETWNKVKL…KILTNEAEKS (186 aa)). Residues 379–564 (KSETWNKVKL…KILTNEAEKS (186 aa)) form a small GTPase-like region. Residues 392–399 (GQEGVGKS), 448–452 (DFGGQ), and 507–510 (THCD) each bind GTP. The 195-residue stretch at 678-872 (VNQKYIDYND…KTYWANGILL (195 aa)) folds into the COR domain. Residues 891-1007 (SILPNNSSST…NNNNNNNNNI (117 aa)) form a disordered region. The span at 897–931 (SSSTSSSTSSSTSSSTSSSSSSSTSSSSTSTTTTT) shows a compositional bias: low complexity. The span at 932–950 (VQIQSSPFGNSTTIVNKLT) shows a compositional bias: polar residues. Residues 951-1007 (NIDNNNNNNNNNNNNNNNNNNINNNNNNNNNNNNNNNNNNNNNNNNNNNNNNNNNNI) show a composition bias toward low complexity. A Protein kinase domain is found at 1185 to 1452 (VVCEEQIGVG…YIVKELTNFY (268 aa)). ATP-binding positions include 1191 to 1199 (IGVGGFGLV) and Lys-1216. Asp-1313 serves as the catalytic Proton acceptor. The tract at residues 1464–1487 (KSINDKSPHPDLISNGVPKLQIAK) is disordered.

Belongs to the protein kinase superfamily. TKL Ser/Thr protein kinase family. ROCO subfamily.

It catalyses the reaction L-seryl-[protein] + ATP = O-phospho-L-seryl-[protein] + ADP + H(+). The enzyme catalyses L-threonyl-[protein] + ATP = O-phospho-L-threonyl-[protein] + ADP + H(+). This Dictyostelium discoideum (Social amoeba) protein is Probable serine/threonine-protein kinase roco11 (roco11).